We begin with the raw amino-acid sequence, 138 residues long: Putative pre-16S rRNA nuclease (138 aa).

It belongs to the YqgF nuclease family.

Its subcellular location is the cytoplasm. Its function is as follows. Could be a nuclease involved in processing of the 5'-end of pre-16S rRNA. The protein is Putative pre-16S rRNA nuclease of Listeria monocytogenes serovar 1/2a (strain ATCC BAA-679 / EGD-e).